Here is a 140-residue protein sequence, read N- to C-terminus: Acyl-coenzyme A thioesterase 13 (140 aa).

Met-1 is subject to N-acetylmethionine. At Thr-2 the chain carries N-acetylthreonine; in Acyl-coenzyme A thioesterase 13, N-terminally processed. Residues Lys-27, Lys-37, and Lys-43 each carry the N6-acetyllysine modification. Position 46 (Glu-46) interacts with CoA. The substrate site is built by Asn-50 and Gly-81. Residues Ser-83, 90 to 95, and 108 to 113 contribute to the CoA site; these read YMSPAK and KQGKTL. Residues Lys-108 and Lys-127 each carry the N6-acetyllysine modification. His-137 contacts CoA.

It belongs to the thioesterase PaaI family. As to quaternary structure, homotetramer. Interacts with PCTP.

Its subcellular location is the cytoplasm. The protein resides in the cytosol. The protein localises to the mitochondrion. It is found in the nucleus. It localises to the cytoskeleton. Its subcellular location is the spindle. The catalysed reaction is a fatty acyl-CoA + H2O = a fatty acid + CoA + H(+). The enzyme catalyses decanoyl-CoA + H2O = decanoate + CoA + H(+). It carries out the reaction octanoyl-CoA + H2O = octanoate + CoA + H(+). It catalyses the reaction butanoyl-CoA + H2O = butanoate + CoA + H(+). The catalysed reaction is hexanoyl-CoA + H2O = hexanoate + CoA + H(+). The enzyme catalyses tetradecanoyl-CoA + H2O = tetradecanoate + CoA + H(+). It carries out the reaction hexadecanoyl-CoA + H2O = hexadecanoate + CoA + H(+). It catalyses the reaction dodecanoyl-CoA + H2O = dodecanoate + CoA + H(+). The catalysed reaction is (9Z)-octadecenoyl-CoA + H2O = (9Z)-octadecenoate + CoA + H(+). The enzyme catalyses (5Z,8Z,11Z,14Z)-eicosatetraenoyl-CoA + H2O = (5Z,8Z,11Z,14Z)-eicosatetraenoate + CoA + H(+). Its function is as follows. Catalyzes the hydrolysis of acyl-CoAs into free fatty acids and coenzyme A (CoASH), regulating their respective intracellular levels. Has acyl-CoA thioesterase activity towards medium (C12) and long-chain (C18) fatty acyl-CoA substrates. Can also hydrolyze 3-hydroxyphenylacetyl-CoA and 3,4-dihydroxyphenylacetyl-CoA (in vitro). May play a role in controlling adaptive thermogenesis. The chain is Acyl-coenzyme A thioesterase 13 from Homo sapiens (Human).